Consider the following 211-residue polypeptide: Protein-methionine-sulfoxide reductase heme-binding subunit MsrQ (211 aa).

A run of 6 helical transmembrane segments spans residues 8 to 28 (VIWL…WLVW), 54 to 74 (FLLA…PLLI), 82 to 102 (LWCF…ELGV), 116 to 136 (PYLT…FTST), 153 to 173 (FVYL…KIIS), and 178 to 198 (IYAG…LSLF).

This sequence belongs to the MsrQ family. As to quaternary structure, heterodimer of a catalytic subunit (MsrP) and a heme-binding subunit (MsrQ). Requires FMN as cofactor. Heme b serves as cofactor.

The protein localises to the cell inner membrane. Functionally, part of the MsrPQ system that repairs oxidized periplasmic proteins containing methionine sulfoxide residues (Met-O), using respiratory chain electrons. Thus protects these proteins from oxidative-stress damage caused by reactive species of oxygen and chlorine generated by the host defense mechanisms. MsrPQ is essential for the maintenance of envelope integrity under bleach stress, rescuing a wide series of structurally unrelated periplasmic proteins from methionine oxidation, including the primary periplasmic chaperone SurA and the lipoprotein Pal. MsrQ provides electrons for reduction to the reductase catalytic subunit MsrP, using the quinone pool of the respiratory chain. This chain is Protein-methionine-sulfoxide reductase heme-binding subunit MsrQ, found in Shigella flexneri.